A 509-amino-acid chain; its full sequence is Monocarboxylate transporter 9 (509 aa).

Over 1–12 the chain is Cytoplasmic; the sequence is MELKKSPDGGWG. Transmembrane regions (helical) follow at residues 13–33, 53–73, 80–100, 102–122, 137–157, 164–184, 305–325, 342–362, 372–392, 398–418, 433–453, and 462–482; these read WVIV…PLAV, WVGS…SLCV, PVTI…SFAP, IYFL…LLYT, GLAL…YAAL, FYGL…ILAC, VFSA…PPSL, IMPL…LLGI, LYLY…IPFA, LALL…FPYV, GILM…VGWF, and IAFY…LLAA. Over 483 to 509 the chain is Cytoplasmic; that stretch reads LPSWDTCNKQLPKPAPTTFLYKVASNV.

It belongs to the major facilitator superfamily. Monocarboxylate porter (TC 2.A.1.13) family.

Its subcellular location is the cell membrane. It carries out the reaction creatine(in) = creatine(out). The enzyme catalyses (R)-carnitine(in) = (R)-carnitine(out). Functionally, extracellular pH-and Na(+)-sensitive low-affinity creatine transporter. Also functions as a pH-independent carnitine efflux transporter. The sequence is that of Monocarboxylate transporter 9 (SLC16A9) from Pongo abelii (Sumatran orangutan).